Reading from the N-terminus, the 187-residue chain is UPF0301 protein PBPRA3139 (187 aa).

It belongs to the UPF0301 (AlgH) family.

This is UPF0301 protein PBPRA3139 from Photobacterium profundum (strain SS9).